The sequence spans 509 residues: Light-independent protochlorophyllide reductase subunit B (509 aa).

Aspartate 36 lines the [4Fe-4S] cluster pocket. The Proton donor role is filled by aspartate 295. Residue 430-431 (GM) participates in substrate binding.

Belongs to the ChlB/BchB/BchZ family. As to quaternary structure, protochlorophyllide reductase is composed of three subunits; ChlL, ChlN and ChlB. Forms a heterotetramer of two ChlB and two ChlN subunits. The cofactor is [4Fe-4S] cluster.

It is found in the plastid. The protein localises to the chloroplast. It catalyses the reaction chlorophyllide a + oxidized 2[4Fe-4S]-[ferredoxin] + 2 ADP + 2 phosphate = protochlorophyllide a + reduced 2[4Fe-4S]-[ferredoxin] + 2 ATP + 2 H2O. It participates in porphyrin-containing compound metabolism; chlorophyll biosynthesis (light-independent). Functionally, component of the dark-operative protochlorophyllide reductase (DPOR) that uses Mg-ATP and reduced ferredoxin to reduce ring D of protochlorophyllide (Pchlide) to form chlorophyllide a (Chlide). This reaction is light-independent. The NB-protein (ChlN-ChlB) is the catalytic component of the complex. The sequence is that of Light-independent protochlorophyllide reductase subunit B from Mesostigma viride (Green alga).